The primary structure comprises 407 residues: 8-amino-7-oxononanoate synthase (407 aa).

Residue arginine 24 participates in substrate binding. Glycine 111 to phenylalanine 112 lines the pyridoxal 5'-phosphate pocket. Substrate is bound at residue histidine 137. Residues serine 183, histidine 211, and threonine 239 each coordinate pyridoxal 5'-phosphate. N6-(pyridoxal phosphate)lysine is present on lysine 242. Threonine 356 contributes to the substrate binding site.

This sequence belongs to the class-II pyridoxal-phosphate-dependent aminotransferase family. BioF subfamily. As to quaternary structure, homodimer. The cofactor is pyridoxal 5'-phosphate.

It carries out the reaction 6-carboxyhexanoyl-[ACP] + L-alanine + H(+) = (8S)-8-amino-7-oxononanoate + holo-[ACP] + CO2. The protein operates within cofactor biosynthesis; biotin biosynthesis. Functionally, catalyzes the decarboxylative condensation of pimeloyl-[acyl-carrier protein] and L-alanine to produce 8-amino-7-oxononanoate (AON), [acyl-carrier protein], and carbon dioxide. This is 8-amino-7-oxononanoate synthase from Stenotrophomonas maltophilia (strain R551-3).